The following is a 147-amino-acid chain: Transcription antitermination protein NusB (147 aa).

The protein belongs to the NusB family.

Its function is as follows. Involved in transcription antitermination. Required for transcription of ribosomal RNA (rRNA) genes. Binds specifically to the boxA antiterminator sequence of the ribosomal RNA (rrn) operons. The chain is Transcription antitermination protein NusB from Legionella pneumophila (strain Paris).